The primary structure comprises 397 residues: Tryptophan synthase beta chain 1 (397 aa).

Lys-94 carries the N6-(pyridoxal phosphate)lysine modification.

This sequence belongs to the TrpB family. Tetramer of two alpha and two beta chains. Pyridoxal 5'-phosphate is required as a cofactor.

The enzyme catalyses (1S,2R)-1-C-(indol-3-yl)glycerol 3-phosphate + L-serine = D-glyceraldehyde 3-phosphate + L-tryptophan + H2O. Its pathway is amino-acid biosynthesis; L-tryptophan biosynthesis; L-tryptophan from chorismate: step 5/5. The beta subunit is responsible for the synthesis of L-tryptophan from indole and L-serine. The chain is Tryptophan synthase beta chain 1 (trpB1) from Archaeoglobus fulgidus (strain ATCC 49558 / DSM 4304 / JCM 9628 / NBRC 100126 / VC-16).